Reading from the N-terminus, the 541-residue chain is Phosphoenolpyruvate carboxykinase (ATP) (541 aa).

ATP is bound at residue 243–250 (GLSGTGKT).

The protein belongs to the phosphoenolpyruvate carboxykinase (ATP) family.

It carries out the reaction oxaloacetate + ATP = phosphoenolpyruvate + ADP + CO2. Its pathway is carbohydrate biosynthesis; gluconeogenesis. The polypeptide is Phosphoenolpyruvate carboxykinase (ATP) (PCK1) (Eremothecium gossypii (strain ATCC 10895 / CBS 109.51 / FGSC 9923 / NRRL Y-1056) (Yeast)).